Reading from the N-terminus, the 72-residue chain is Putative membrane protein insertion efficiency factor (72 aa).

It belongs to the UPF0161 family.

The protein localises to the cell inner membrane. Could be involved in insertion of integral membrane proteins into the membrane. The polypeptide is Putative membrane protein insertion efficiency factor (Amoebophilus asiaticus (strain 5a2)).